Consider the following 323-residue polypeptide: NADH-cytochrome b5 reductase 2 (323 aa).

Residues 32-48 (LAPIYVAVGLTGLGVGL) form a helical membrane-spanning segment. Residues 72 to 177 (QGWVDLKLAQ…KGPIPKYPWE (106 aa)) form the FAD-binding FR-type domain. 180–215 (KHKHICLIAGGTGITPMYQLARKIFKDPEDQTKVTL) provides a ligand contact to FAD.

The protein belongs to the flavoprotein pyridine nucleotide cytochrome reductase family. FAD is required as a cofactor.

It is found in the mitochondrion outer membrane. The catalysed reaction is 2 Fe(III)-[cytochrome b5] + NADH = 2 Fe(II)-[cytochrome b5] + NAD(+) + H(+). May mediate the reduction of outer membrane cytochrome b5. The sequence is that of NADH-cytochrome b5 reductase 2 (mcr1) from Neosartorya fischeri (strain ATCC 1020 / DSM 3700 / CBS 544.65 / FGSC A1164 / JCM 1740 / NRRL 181 / WB 181) (Aspergillus fischerianus).